A 361-amino-acid chain; its full sequence is Carbon monoxide-induced hydrogenase (361 aa).

Ni(2+)-binding residues include C64, C67, C355, and C358.

This sequence to E.coli formate hydrogenlyase hydrogenase isozyme 3 and to bovine mitochondrial NADH-ubiquinone oxidoreductase. Ni(2+) serves as cofactor.

Functionally, the carbon monoxide dehydrogenase (CODH) oxidizes carbon monoxide coupled, via CooF, to the reduction of a hydrogen cation by a hydrogenase (probably CooH). This Rhodospirillum rubrum protein is Carbon monoxide-induced hydrogenase (cooH).